A 433-amino-acid polypeptide reads, in one-letter code: Zinc finger protein CONSTANS-LIKE 15 (433 aa).

Positions 9, 12, 32, 37, 52, 55, 75, and 80 each coordinate Zn(2+). A B box-type 1; atypical zinc finger spans residues Cys-9 to Ile-51. Residues Cys-52–Val-94 form a B box-type 2; atypical zinc finger. Residues Asp-319–Ser-353 form a disordered region. The span at Ser-324 to Pro-340 shows a compositional bias: polar residues. Positions Thr-374–Thr-398 form a coiled coil. Residues Arg-385–Ala-427 enclose the CCT domain.

The protein belongs to the CONSTANS family.

The protein resides in the nucleus. The chain is Zinc finger protein CONSTANS-LIKE 15 (COL15) from Arabidopsis thaliana (Mouse-ear cress).